Consider the following 576-residue polypeptide: Proline--tRNA ligase (576 aa).

It belongs to the class-II aminoacyl-tRNA synthetase family. ProS type 1 subfamily. As to quaternary structure, homodimer.

The protein localises to the cytoplasm. The catalysed reaction is tRNA(Pro) + L-proline + ATP = L-prolyl-tRNA(Pro) + AMP + diphosphate. Functionally, catalyzes the attachment of proline to tRNA(Pro) in a two-step reaction: proline is first activated by ATP to form Pro-AMP and then transferred to the acceptor end of tRNA(Pro). As ProRS can inadvertently accommodate and process non-cognate amino acids such as alanine and cysteine, to avoid such errors it has two additional distinct editing activities against alanine. One activity is designated as 'pretransfer' editing and involves the tRNA(Pro)-independent hydrolysis of activated Ala-AMP. The other activity is designated 'posttransfer' editing and involves deacylation of mischarged Ala-tRNA(Pro). The misacylated Cys-tRNA(Pro) is not edited by ProRS. This chain is Proline--tRNA ligase, found in Leptospira interrogans serogroup Icterohaemorrhagiae serovar Lai (strain 56601).